Reading from the N-terminus, the 305-residue chain is Tetraacyldisaccharide 4'-kinase (305 aa).

Residue 39-46 coordinates ATP; the sequence is SVGGNGKT.

The protein belongs to the LpxK family.

It carries out the reaction a lipid A disaccharide + ATP = a lipid IVA + ADP + H(+). Its pathway is glycolipid biosynthesis; lipid IV(A) biosynthesis; lipid IV(A) from (3R)-3-hydroxytetradecanoyl-[acyl-carrier-protein] and UDP-N-acetyl-alpha-D-glucosamine: step 6/6. In terms of biological role, transfers the gamma-phosphate of ATP to the 4'-position of a tetraacyldisaccharide 1-phosphate intermediate (termed DS-1-P) to form tetraacyldisaccharide 1,4'-bis-phosphate (lipid IVA). The sequence is that of Tetraacyldisaccharide 4'-kinase from Pseudoalteromonas atlantica (strain T6c / ATCC BAA-1087).